We begin with the raw amino-acid sequence, 347 residues long: Spermidine/putrescine import ATP-binding protein PotA (347 aa).

Residues 6–236 (IEIKNVYKEF…PKNAFVAKFI (231 aa)) form the ABC transporter domain. 38-45 (GPSGCGKT) is a binding site for ATP.

Belongs to the ABC transporter superfamily. Spermidine/putrescine importer (TC 3.A.1.11.1) family. As to quaternary structure, the complex is composed of two ATP-binding proteins (PotA), two transmembrane proteins (PotB and PotC) and a solute-binding protein (PotD).

Its subcellular location is the cell membrane. The enzyme catalyses ATP + H2O + polyamine-[polyamine-binding protein]Side 1 = ADP + phosphate + polyamineSide 2 + [polyamine-binding protein]Side 1.. Functionally, part of the ABC transporter complex PotABCD involved in spermidine/putrescine import. Responsible for energy coupling to the transport system. The protein is Spermidine/putrescine import ATP-binding protein PotA of Clostridium novyi (strain NT).